An 829-amino-acid polypeptide reads, in one-letter code: Cap-specific mRNA (nucleoside-2'-O-)-methyltransferase 1 (829 aa).

Residues 1–68 (MKRAAQASDE…DSQNSQGSMA (68 aa)) form a disordered region. The Bipartite nuclear localization signal motif lies at 2–16 (KRAAQASDEPLKKRK). Over residues 31–44 (QRTTSQDSSQSESL) the composition is skewed to low complexity. Residues 55–68 (SRPSDSQNSQGSMA) are compositionally biased toward polar residues. Residues 79–125 (YNNVSQKLMAKMGFREGEGLGKYGQGRKEIVEASTQRGRRGLGLMLK) form the G-patch domain. Substrate is bound by residues 195 to 199 (KTVFD) and R210. Residues 223-442 (FFLNRAAMKM…ERYVVCKGLK (220 aa)) enclose the RrmJ-type SAM-dependent 2'-O-MTase domain. Position 226 (N226) interacts with S-adenosyl-L-methionine. The active site involves K231. S-adenosyl-L-methionine is bound by residues 269–275 (CAGPGGF) and 327–328 (DI). D356 is an active-site residue. 366-368 (NLQ) is a binding site for substrate. Catalysis depends on K396, which acts as the Proton acceptor. N431 provides a ligand contact to substrate. The region spanning 745–779 (KTVNDPWTMAFSKSSKRKFFYNKQTKESTYDLPAT) is the WW domain.

It localises to the nucleus. The enzyme catalyses a 5'-end (N(7)-methyl 5'-triphosphoguanosine)-ribonucleoside in mRNA + S-adenosyl-L-methionine = a 5'-end (N(7)-methyl 5'-triphosphoguanosine)-(2'-O-methyl-ribonucleoside) in mRNA + S-adenosyl-L-homocysteine + H(+). S-adenosyl-L-methionine-dependent methyltransferase that mediates mRNA cap1 2'-O-ribose methylation to the 5'-cap structure of mRNAs. Methylates the ribose of the first nucleotide of a m(7)GpppG-capped mRNA and small nuclear RNA (snRNA) to produce m(7)GpppRm (cap1). Displays a preference for cap0 transcripts. Cap1 modification is linked to higher levels of translation. May be involved in the interferon response pathway. This Danio rerio (Zebrafish) protein is Cap-specific mRNA (nucleoside-2'-O-)-methyltransferase 1 (cmtr1).